We begin with the raw amino-acid sequence, 670 residues long: DNA ligase (670 aa).

NAD(+)-binding positions include 35–39 (DSVYD), 84–85 (SL), and Glu-116. Lys-118 (N6-AMP-lysine intermediate) is an active-site residue. Residues Arg-139, Glu-176, Lys-293, and Lys-317 each coordinate NAD(+). 4 residues coordinate Zn(2+): Cys-411, Cys-414, Cys-429, and Cys-435. The region spanning 592–670 (VVKSEIAGKT…EEAFLKLLKS (79 aa)) is the BRCT domain.

This sequence belongs to the NAD-dependent DNA ligase family. LigA subfamily. The cofactor is Mg(2+). Mn(2+) is required as a cofactor.

The catalysed reaction is NAD(+) + (deoxyribonucleotide)n-3'-hydroxyl + 5'-phospho-(deoxyribonucleotide)m = (deoxyribonucleotide)n+m + AMP + beta-nicotinamide D-nucleotide.. Its function is as follows. DNA ligase that catalyzes the formation of phosphodiester linkages between 5'-phosphoryl and 3'-hydroxyl groups in double-stranded DNA using NAD as a coenzyme and as the energy source for the reaction. It is essential for DNA replication and repair of damaged DNA. The protein is DNA ligase of Coxiella burnetii (strain Dugway 5J108-111).